The sequence spans 245 residues: Adenosine 5'-phosphosulfate reductase (245 aa).

Positions 124, 125, 205, and 208 each coordinate [4Fe-4S] cluster. Cys-231 functions as the Nucleophile; cysteine thiosulfonate intermediate in the catalytic mechanism.

It belongs to the PAPS reductase family. CysH subfamily. [4Fe-4S] cluster serves as cofactor.

The protein localises to the cytoplasm. The enzyme catalyses [thioredoxin]-disulfide + sulfite + AMP + 2 H(+) = adenosine 5'-phosphosulfate + [thioredoxin]-dithiol. It functions in the pathway sulfur metabolism; hydrogen sulfide biosynthesis; sulfite from sulfate. In terms of biological role, catalyzes the formation of sulfite from adenosine 5'-phosphosulfate (APS) using thioredoxin as an electron donor. This chain is Adenosine 5'-phosphosulfate reductase, found in Chelativorans sp. (strain BNC1).